Reading from the N-terminus, the 902-residue chain is Leucine-rich repeat-containing G-protein coupled receptor 5A (902 aa).

Residues 1–22 (MDTSRTSLFLCSVLYSLQLVGS) form the signal peptide. Over 23–557 (ARPGKQHRSC…DHLFGSWLTR (535 aa)) the chain is Extracellular. 2 disulfide bridges follow: Cys-32-Cys-38 and Cys-36-Cys-49. Residues 32–61 (CPTPCECEQDGMLVRVDCSDRGLTGLPRNI) form the LRRNT domain. 17 LRR repeats span residues 41 to 61 (DGMLVRVDCSDRGLTGLPRNI), 62 to 85 (SIFTSYLDLSMNNITKLPSNALHN), 86 to 109 (LHFLEELRLAGNDLTYIPKGAFAG), 111 to 133 (GSLKVLMLQNNLLRQVPSEALQN), 134 to 157 (LRSLQSLRLDANHISYVPPSSFNG), 159 to 181 (FSLRHLWLDDNSLTEIPVRALES), 182 to 205 (LSALQAMTLALNKIHHIPDYAFGN), 207 to 229 (SSLVVLHLHNNRIYSLGKKCFDG), 230 to 253 (LHSLETLDLNYNNLDEFPAAIKTL), 254 to 276 (KNLKELGFHSNNIKSIPEQAFIG), 278 to 300 (PSLITTHFYDNPIQHVGRSAFQH), 301 to 324 (LPELRTLILNGASQITEFPDLTGT), 325 to 347 (TSLESLTLTGAQLVYLPSAVCNQ), 348 to 372 (LPNLKVIDLSYNHIKDLPSFSGCQR), 374 to 393 (QKIDLRHNEVYEIRFTTFQQ), 394 to 417 (LVGLRSLDLAWNKIAVIHPSSFSS), and 418 to 441 (LPSLIKLDLSSNHLTSFPVTGLHG). Asn-60 and Asn-74 each carry an N-linked (GlcNAc...) asparagine glycan. Asn-205 carries N-linked (GlcNAc...) asparagine glycosylation. Cysteines 345 and 370 form a disulfide. Cys-476 and Cys-537 form a disulfide bridge. Asn-496 carries N-linked (GlcNAc...) asparagine glycosylation. Residues 558 to 578 (IGVWLIVLLSFVCNALVIATV) traverse the membrane as a helical segment. At 579–589 (FRPLSYVPSIK) the chain is on the cytoplasmic side. A helical transmembrane segment spans residues 590–610 (LLIGLIAIINTLMGLSSGVLA). An LRR 18 repeat occupies 598–619 (INTLMGLSSGVLATVDALTFGN). At 611-634 (TVDALTFGNFAQYGAWWESGVGCQ) the chain is on the extracellular side. A disulfide bond links Cys-633 and Cys-708. A helical transmembrane segment spans residues 635–655 (ITGFLSVFAAETSVFLLTVAA). Topologically, residues 656–678 (LERGFSIKCTTKFETKSSFLSVK) are cytoplasmic. The helical transmembrane segment at 679-699 (LSIVFCFLLSIIIAVSPLMSG) threads the bilayer. Residues 700 to 718 (STYGTSPFCFPLLFGDPSS) are Extracellular-facing. The helical transmembrane segment at 719–739 (MVFMVALVLLNSLCFLVMTVA) threads the bilayer. Residues 740–763 (YTKLYCSLEKGELENVWDCSMVKH) are Cytoplasmic-facing. A helical transmembrane segment spans residues 764–784 (IALLLFTNCILYCPVAFLSFS). Residues 785–798 (SLLNLTFISPEVNK) lie on the Extracellular side of the membrane. N-linked (GlcNAc...) asparagine glycans are attached at residues Asn-788 and Asn-797. Residues 799-819 (SILLLIIPLPACLNPLLYILF) traverse the membrane as a helical segment. Topologically, residues 820–902 (NPHFKEDIGS…LSAVAFVPCH (83 aa)) are cytoplasmic.

The protein belongs to the G-protein coupled receptor 1 family. In terms of tissue distribution, expressed in the developing epithelial stem cells of the intestine.

It is found in the cell membrane. The protein resides in the golgi apparatus. It localises to the trans-Golgi network membrane. Receptor for R-spondins that potentiates the canonical Wnt signaling pathway and acts as a stem cell marker of the intestinal epithelium and the hair follicle. Upon binding to R-spondins (RSPO1, RSPO2, RSPO3 or RSPO4), associates with phosphorylated LRP6 and frizzled receptors that are activated by extracellular Wnt receptors, triggering the canonical Wnt signaling pathway to increase expression of target genes. In contrast to classical G-protein coupled receptors, does not activate heterotrimeric G-proteins to transduce the signal. Involved in the development and/or maintenance of the adult intestinal stem cells during postembryonic development. The protein is Leucine-rich repeat-containing G-protein coupled receptor 5A (lgr5-a) of Xenopus laevis (African clawed frog).